The chain runs to 356 residues: Uroporphyrinogen decarboxylase (356 aa).

Substrate contacts are provided by residues 23 to 27 (RQAGR), Asp72, Tyr148, Ser203, and His321.

This sequence belongs to the uroporphyrinogen decarboxylase family. In terms of assembly, homodimer.

It is found in the cytoplasm. It catalyses the reaction uroporphyrinogen III + 4 H(+) = coproporphyrinogen III + 4 CO2. Its pathway is porphyrin-containing compound metabolism; protoporphyrin-IX biosynthesis; coproporphyrinogen-III from 5-aminolevulinate: step 4/4. In terms of biological role, catalyzes the decarboxylation of four acetate groups of uroporphyrinogen-III to yield coproporphyrinogen-III. The chain is Uroporphyrinogen decarboxylase from Chloroflexus aggregans (strain MD-66 / DSM 9485).